The sequence spans 128 residues: Cytochrome c' (128 aa).

Positions 13, 17, 69, 70, 118, 121, and 122 each coordinate heme c.

In terms of assembly, homodimer. In terms of processing, binds 1 heme c group covalently per subunit.

Functionally, cytochrome c' is the most widely occurring bacterial c-type cytochrome. Cytochromes c' are high-spin proteins and the heme has no sixth ligand. Their exact function is not known. This chain is Cytochrome c', found in Magnetospirillum molischianum (Rhodospirillum molischianum).